Consider the following 30-residue polypeptide: GCPRILMRCKQDSDCLAGCVCGPNGFCGSP.

3 disulfide bridges follow: Cys-2–Cys-19, Cys-9–Cys-21, and Cys-15–Cys-27.

Belongs to the protease inhibitor I7 (squash-type serine protease inhibitor) family.

The protein localises to the secreted. Its function is as follows. Inhibits trypsin. In Ecballium elaterium (Squirting cucumber), this protein is Trypsin inhibitor 2.